Here is a 164-residue protein sequence, read N- to C-terminus: Phosphopantetheine adenylyltransferase (164 aa).

Residue S9 coordinates substrate. ATP-binding positions include 9–10 (SF) and H17. Residues K41, V78, and R92 each contribute to the substrate site. Residues 93–95 (GLR), E103, and 128–134 (SRPITAT) each bind ATP.

This sequence belongs to the bacterial CoaD family. Homohexamer. Mg(2+) serves as cofactor.

The protein resides in the cytoplasm. It carries out the reaction (R)-4'-phosphopantetheine + ATP + H(+) = 3'-dephospho-CoA + diphosphate. It participates in cofactor biosynthesis; coenzyme A biosynthesis; CoA from (R)-pantothenate: step 4/5. Reversibly transfers an adenylyl group from ATP to 4'-phosphopantetheine, yielding dephospho-CoA (dPCoA) and pyrophosphate. This Agrobacterium fabrum (strain C58 / ATCC 33970) (Agrobacterium tumefaciens (strain C58)) protein is Phosphopantetheine adenylyltransferase.